The chain runs to 86 residues: Large ribosomal subunit protein uL23 (86 aa).

The protein belongs to the universal ribosomal protein uL23 family. Part of the 50S ribosomal subunit. Contacts protein L29.

Its function is as follows. Binds to 23S rRNA. One of the proteins that surrounds the polypeptide exit tunnel on the outside of the ribosome. This Methanococcus maripaludis (strain C5 / ATCC BAA-1333) protein is Large ribosomal subunit protein uL23.